The chain runs to 210 residues: 3-hydroxy-3-methylglutaryl-coenzyme A reductase 2 (210 aa).

Active-site charge relay system residues include K21 and D97. The chain crosses the membrane as a helical span at residues 166 to 186 (LLATIVAGSVLAGELSLMSAI). Residue H195 is the Proton donor of the active site. Residue N199 is glycosylated (N-linked (GlcNAc...) asparagine).

Belongs to the HMG-CoA reductase family.

Its subcellular location is the endoplasmic reticulum membrane. It is found in the mitochondrion membrane. The protein resides in the plastid membrane. It catalyses the reaction (R)-mevalonate + 2 NADP(+) + CoA = (3S)-3-hydroxy-3-methylglutaryl-CoA + 2 NADPH + 2 H(+). It participates in metabolic intermediate biosynthesis; (R)-mevalonate biosynthesis; (R)-mevalonate from acetyl-CoA: step 3/3. In terms of biological role, catalyzes the synthesis of mevalonate. The specific precursor of all isoprenoid compounds present in plants. The chain is 3-hydroxy-3-methylglutaryl-coenzyme A reductase 2 (HMGR2) from Hevea brasiliensis (Para rubber tree).